The chain runs to 63 residues: Large ribosomal subunit protein eL37 (63 aa).

The Zn(2+) site is built by cysteine 20, cysteine 23, cysteine 35, and cysteine 38. The segment at 20–38 (CRRCGRRAFNVKKGYCAAC) adopts a C4-type zinc-finger fold.

The protein belongs to the eukaryotic ribosomal protein eL37 family. Requires Zn(2+) as cofactor.

Functionally, binds to the 23S rRNA. This is Large ribosomal subunit protein eL37 from Thermococcus gammatolerans (strain DSM 15229 / JCM 11827 / EJ3).